A 335-amino-acid chain; its full sequence is Magnesium-protoporphyrin IX monomethyl ester [oxidative] cyclase (335 aa).

The protein belongs to the AcsF family. Fe cation is required as a cofactor.

The protein resides in the plastid. Its subcellular location is the chloroplast. It catalyses the reaction Mg-protoporphyrin IX 13-monomethyl ester + 3 NADPH + 3 O2 + 2 H(+) = 3,8-divinyl protochlorophyllide a + 3 NADP(+) + 5 H2O. Its pathway is porphyrin-containing compound metabolism; chlorophyll biosynthesis (light-independent). In terms of biological role, catalyzes the formation of the isocyclic ring in chlorophyll biosynthesis. Mediates the cyclase reaction, which results in the formation of divinylprotochlorophyllide (Pchlide) characteristic of all chlorophylls from magnesium-protoporphyrin IX 13-monomethyl ester (MgPMME). This chain is Magnesium-protoporphyrin IX monomethyl ester [oxidative] cyclase, found in Cyanidioschyzon merolae (strain NIES-3377 / 10D) (Unicellular red alga).